The following is a 345-amino-acid chain: Uroporphyrinogen decarboxylase (345 aa).

Substrate is bound by residues 23–27, aspartate 73, tyrosine 149, threonine 203, and histidine 319; that span reads RQAGR.

This sequence belongs to the uroporphyrinogen decarboxylase family. As to quaternary structure, homodimer.

Its subcellular location is the cytoplasm. The enzyme catalyses uroporphyrinogen III + 4 H(+) = coproporphyrinogen III + 4 CO2. It participates in porphyrin-containing compound metabolism; protoporphyrin-IX biosynthesis; coproporphyrinogen-III from 5-aminolevulinate: step 4/4. Its function is as follows. Catalyzes the decarboxylation of four acetate groups of uroporphyrinogen-III to yield coproporphyrinogen-III. The polypeptide is Uroporphyrinogen decarboxylase (Vesicomyosocius okutanii subsp. Calyptogena okutanii (strain HA)).